Here is a 202-residue protein sequence, read N- to C-terminus: Imidazoleglycerol-phosphate dehydratase (202 aa).

The protein belongs to the imidazoleglycerol-phosphate dehydratase family.

The protein localises to the cytoplasm. It catalyses the reaction D-erythro-1-(imidazol-4-yl)glycerol 3-phosphate = 3-(imidazol-4-yl)-2-oxopropyl phosphate + H2O. It participates in amino-acid biosynthesis; L-histidine biosynthesis; L-histidine from 5-phospho-alpha-D-ribose 1-diphosphate: step 6/9. In Acinetobacter baumannii (strain SDF), this protein is Imidazoleglycerol-phosphate dehydratase.